Reading from the N-terminus, the 392-residue chain is HORMA domain-containing protein 1 (392 aa).

An HORMA domain is found at 25–227; that stretch reads HQSLMFVKRL…TPFHTFRLKV (203 aa). A disordered region spans residues 323–359; it reads SELDVSESKTRSGKIFQSKMVNGNNQQGQTSKENRKR. The span at 341–353 shows a compositional bias: polar residues; it reads KMVNGNNQQGQTS. Ser-375 is modified (phosphoserine). Residues 381-384 carry the Nuclear localization signal motif; sequence KKRR.

As to quaternary structure, interacts with HORMAD2. Interacts with IHO1. Phosphorylated at Ser-375 in a SPO11-dependent manner. In terms of tissue distribution, specifically expressed in meiotic germ cells.

The protein resides in the nucleus. The protein localises to the chromosome. It localises to the cytoplasm. Its function is as follows. Plays a key role in meiotic progression. Regulates 3 different functions during meiosis: ensures that sufficient numbers of processed DNA double-strand breaks (DSBs) are available for successful homology search by increasing the steady-state numbers of single-stranded DSB ends. Promotes synaptonemal-complex formation independently of its role in homology search. Plays a key role in the male mid-pachytene checkpoint and the female meiotic prophase checkpoint: required for efficient build-up of ATR activity on unsynapsed chromosome regions, a process believed to form the basis of meiotic silencing of unsynapsed chromatin (MSUC) and meiotic prophase quality control in both sexes. This chain is HORMA domain-containing protein 1, found in Mus musculus (Mouse).